Consider the following 148-residue polypeptide: Endoribonuclease YbeY (148 aa).

Residues histidine 113, histidine 117, and histidine 123 each coordinate Zn(2+).

Belongs to the endoribonuclease YbeY family. Requires Zn(2+) as cofactor.

The protein localises to the cytoplasm. Single strand-specific metallo-endoribonuclease involved in late-stage 70S ribosome quality control and in maturation of the 3' terminus of the 16S rRNA. The sequence is that of Endoribonuclease YbeY from Borrelia recurrentis (strain A1).